The chain runs to 124 residues: Alpha-amylase inhibitor 0.19 (124 aa).

Intrachain disulfides connect C6–C52, C20–C41, C28–C83, C42–C99, and C54–C115.

The protein belongs to the protease inhibitor I6 (cereal trypsin/alpha-amylase inhibitor) family. In terms of assembly, homodimer. Post-translationally, the disulfide bonds are essential for the inhibitor activity. In terms of tissue distribution, endosperm.

The protein resides in the secreted. In terms of biological role, alpha-amylase inhibitor. The polypeptide is Alpha-amylase inhibitor 0.19 (Triticum aestivum (Wheat)).